Here is a 533-residue protein sequence, read N- to C-terminus: Glucose-6-phosphate isomerase (533 aa).

The active-site Proton donor is Glu322. Residues His351 and Lys455 contribute to the active site.

The protein belongs to the GPI family.

The protein localises to the cytoplasm. It carries out the reaction alpha-D-glucose 6-phosphate = beta-D-fructose 6-phosphate. It functions in the pathway carbohydrate biosynthesis; gluconeogenesis. The protein operates within carbohydrate degradation; glycolysis; D-glyceraldehyde 3-phosphate and glycerone phosphate from D-glucose: step 2/4. Its function is as follows. Catalyzes the reversible isomerization of glucose-6-phosphate to fructose-6-phosphate. The protein is Glucose-6-phosphate isomerase of Desulfitobacterium hafniense (strain Y51).